A 212-amino-acid chain; its full sequence is A-kinase-interacting protein 1 (212 aa).

In terms of assembly, interacts with PRKACA and RELA.

The protein resides in the nucleus. In terms of biological role, enhances NF-kappa-B transcriptional activity by regulating the nuclear localization of the NF-kappa-B subunit RELA and promoting the phosphorylation of RELA by PRKACA. Regulates the effect of the cAMP-dependent protein kinase signaling pathway on the NF-kappa-B activation cascade. This is A-kinase-interacting protein 1 (Akip1) from Mus musculus (Mouse).